A 196-amino-acid chain; its full sequence is NADPH:quinone oxidoreductase (196 aa).

Belongs to the SsuE family. Homotetramer. Requires FMN as cofactor.

The protein resides in the cell membrane. It carries out the reaction a quinone + NADH + H(+) = a quinol + NAD(+). The enzyme catalyses a quinone + NADPH + H(+) = a quinol + NADP(+). In terms of biological role, the enzyme apparently serves as a quinone reductase in connection with conjugation reactions of hydroquinones involved in detoxification pathways. This Arabidopsis thaliana (Mouse-ear cress) protein is NADPH:quinone oxidoreductase (NQR).